A 739-amino-acid polypeptide reads, in one-letter code: Phosphoribosylformylglycinamidine synthase subunit PurL (739 aa).

Residue H54 is part of the active site. The ATP site is built by Y57 and K96. Residue E98 participates in Mg(2+) binding. Residues 99–102 and R121 each bind substrate; that span reads SHNH. The active-site Proton acceptor is H100. Position 122 (D122) interacts with Mg(2+). Q245 contributes to the substrate binding site. D273 is a Mg(2+) binding site. Residue 317-319 coordinates substrate; it reads ESQ. 2 residues coordinate ATP: D500 and G537. N538 lines the Mg(2+) pocket. Residue S540 participates in substrate binding.

Belongs to the FGAMS family. In terms of assembly, monomer. Part of the FGAM synthase complex composed of 1 PurL, 1 PurQ and 2 PurS subunits.

It localises to the cytoplasm. The catalysed reaction is N(2)-formyl-N(1)-(5-phospho-beta-D-ribosyl)glycinamide + L-glutamine + ATP + H2O = 2-formamido-N(1)-(5-O-phospho-beta-D-ribosyl)acetamidine + L-glutamate + ADP + phosphate + H(+). It functions in the pathway purine metabolism; IMP biosynthesis via de novo pathway; 5-amino-1-(5-phospho-D-ribosyl)imidazole from N(2)-formyl-N(1)-(5-phospho-D-ribosyl)glycinamide: step 1/2. Its function is as follows. Part of the phosphoribosylformylglycinamidine synthase complex involved in the purines biosynthetic pathway. Catalyzes the ATP-dependent conversion of formylglycinamide ribonucleotide (FGAR) and glutamine to yield formylglycinamidine ribonucleotide (FGAM) and glutamate. The FGAM synthase complex is composed of three subunits. PurQ produces an ammonia molecule by converting glutamine to glutamate. PurL transfers the ammonia molecule to FGAR to form FGAM in an ATP-dependent manner. PurS interacts with PurQ and PurL and is thought to assist in the transfer of the ammonia molecule from PurQ to PurL. The chain is Phosphoribosylformylglycinamidine synthase subunit PurL from Bacillus cereus (strain Q1).